Consider the following 517-residue polypeptide: GMP synthase [glutamine-hydrolyzing] (517 aa).

A Glutamine amidotransferase type-1 domain is found at 11–202 (KIIVLDFGSQ…AFDVCGAKDN (192 aa)). The Nucleophile role is filled by cysteine 88. Residues histidine 176 and glutamate 178 contribute to the active site. The GMPS ATP-PPase domain occupies 203 to 392 (WTMDDFIKLS…LGLPHDLVWR (190 aa)). Residue 230–236 (SGGVDSS) participates in ATP binding.

Homodimer.

The enzyme catalyses XMP + L-glutamine + ATP + H2O = GMP + L-glutamate + AMP + diphosphate + 2 H(+). It participates in purine metabolism; GMP biosynthesis; GMP from XMP (L-Gln route): step 1/1. Catalyzes the synthesis of GMP from XMP. This chain is GMP synthase [glutamine-hydrolyzing], found in Lactobacillus delbrueckii subsp. bulgaricus (strain ATCC 11842 / DSM 20081 / BCRC 10696 / JCM 1002 / NBRC 13953 / NCIMB 11778 / NCTC 12712 / WDCM 00102 / Lb 14).